The following is a 98-amino-acid chain: A-type ATP synthase subunit F (98 aa).

The protein belongs to the V-ATPase F subunit family. In terms of assembly, the A-type ATPase is composed of subunits A(3), B(3), C, D, E(1 or 2), F, H(2), I and K(x).

Its subcellular location is the cell membrane. Its function is as follows. Component of the A-type ATP synthase that produces ATP from ADP in the presence of a proton gradient across the membrane. This is A-type ATP synthase subunit F from Methanocaldococcus jannaschii (strain ATCC 43067 / DSM 2661 / JAL-1 / JCM 10045 / NBRC 100440) (Methanococcus jannaschii).